The following is a 343-amino-acid chain: Labda-7,13(16),14-triene synthase (343 aa).

Mg(2+) contacts are provided by D114 and E119. The DDXXXE motif motif lies at D114–E119. Residue R206 coordinates substrate. Mg(2+) is bound by residues N252, S256, and E260. The NXXXSXXXE motif signature appears at N252–E260.

Belongs to the terpene synthase family. The cofactor is Mg(2+).

It carries out the reaction (13E)-labda-7,13-dien-15-yl diphosphate = labda-7,13(16),14-triene + diphosphate. Its function is as follows. Involved in the biosynthesis of the labdane-type bicyclic diterpene labda-7,13(16),14-triene. Catalyzes the conversion of labda-7,13(E)-dienyl diphosphate to yield labda-7,13(16),14-triene. The polypeptide is Labda-7,13(16),14-triene synthase (Streptomyces clavuligerus).